The primary structure comprises 109 residues: Class I hydrophobin 18 (109 aa).

An N-terminal signal peptide occupies residues 1-20 (MFTEQVLNVIILLQTATVTA). Disulfide bonds link C28-C88, C35-C82, C36-C69, and C89-C102. N-linked (GlcNAc...) asparagine glycosylation is found at N91 and N106.

This sequence belongs to the fungal hydrophobin family. As to quaternary structure, self-assembles to form functional amyloid fibrils called rodlets. Self-assembly into fibrillar rodlets occurs spontaneously at hydrophobic:hydrophilic interfaces and the rodlets further associate laterally to form amphipathic monolayers.

The protein localises to the secreted. It is found in the cell wall. Functionally, aerial growth, conidiation, and dispersal of filamentous fungi in the environment rely upon a capability of their secreting small amphipathic proteins called hydrophobins (HPBs) with low sequence identity. Class I can self-assemble into an outermost layer of rodlet bundles on aerial cell surfaces, conferring cellular hydrophobicity that supports fungal growth, development and dispersal; whereas Class II form highly ordered films at water-air interfaces through intermolecular interactions but contribute nothing to the rodlet structure. This Pleurotus ostreatus (strain PC15) (Oyster mushroom) protein is Class I hydrophobin 18.